The following is a 438-amino-acid chain: Serine/threonine exchanger SteT (438 aa).

Over 1-11 (MHTEDNGLKKE) the chain is Cytoplasmic. A helical transmembrane segment spans residues 12–32 (IGLLFALTLVIGTIIGSGVFM). The Extracellular segment spans residues 33–45 (KPGAVLAYSGDSK). A helical transmembrane segment spans residues 46–66 (MALFAWLLGGILTLAGGLTIA). Residues 67-98 (EIGTQIPKTGGLYTYLEEVYGEFWGFLCGWVQ) lie on the Cytoplasmic side of the membrane. Residues 99 to 119 (IIIYGPAIIGALGLYFGSLMA) form a helical membrane-spanning segment. Topologically, residues 120–126 (NLFGWGS) are extracellular. The chain crosses the membrane as a helical span at residues 127–147 (GLSKVIGIIAVLFLCVINIIG). Topologically, residues 148-151 (TKYG) are cytoplasmic. A helical membrane pass occupies residues 152–172 (GFVQTLTTIGKLIPIACIIVF). At 173-193 (GLWKGDQHIFTAVNESISDMN) the chain is on the extracellular side. Residues 194–214 (FGAAILATLFAYDGWILLAAL) traverse the membrane as a helical segment. At 215–230 (GGEMKNPEKLLPRAMT) the chain is on the cytoplasmic side. The helical transmembrane segment at 231–251 (GGLLIVTAIYIFINFALLHIL) threads the bilayer. The Extracellular portion of the chain corresponds to 252 to 269 (SANEIVTLGENATSTAAT). Residues 270 to 290 (MLFGSIGGKLISVGIIVSIFG) traverse the membrane as a helical segment. Over 291-327 (CLNGKVLSFPRVSFAMAERKQLPFAEKLSHVHPSFRT) the chain is Cytoplasmic. A helical transmembrane segment spans residues 328–348 (PWIAISFQIALALIMMLISNP). The Extracellular segment spans residues 349-352 (DKLS). The chain crosses the membrane as a helical span at residues 353–373 (EISIFMIYIFYVMAFFAVFIL). Residues 374 to 388 (RKRAKGEKRAYSVPL) lie on the Cytoplasmic side of the membrane. A helical membrane pass occupies residues 389-409 (YPFMPILAIAGSFFVLGSTLI). Over 410–411 (TD) the chain is Extracellular. Residues 412–432 (TMSCGLSILIGLAGLPVYYGM) traverse the membrane as a helical segment. Topologically, residues 433-438 (KKRKAS) are cytoplasmic.

This sequence belongs to the amino acid-polyamine-organocation (APC) superfamily. L-type amino acid transporter (LAT) (TC 2.A.3.8) family. Monomer.

The protein resides in the cell membrane. Exhibits an obligate exchange activity for serine, threonine and aromatic amino acids. The protein is Serine/threonine exchanger SteT (steT) of Bacillus subtilis (strain 168).